A 171-amino-acid polypeptide reads, in one-letter code: Bursicon (171 aa).

An N-terminal signal peptide occupies residues 1-31 (MISSPSTPATFAAGSLVLLCLVLGGGHFALA). Intrachain disulfides connect Cys-47/Cys-96, Cys-61/Cys-110, Cys-71/Cys-131, Cys-75/Cys-133, and Cys-93/Cys-136. In terms of domain architecture, CTCK spans 47–137 (CQVTPVIHVL…PLECMCRPCT (91 aa)).

In terms of assembly, heterodimer of burs and pburs.

It is found in the secreted. Final heterodimeric neurohormone released at the end of the molting cycle, involved in the sclerotization (tanning) of the insect cuticle, melanization and wing spreading. This Culex pipiens pipiens (Northern house mosquito) protein is Bursicon.